A 71-amino-acid chain; its full sequence is UPF0346 protein SP70585_0986 (71 aa).

It belongs to the UPF0346 family.

In Streptococcus pneumoniae (strain 70585), this protein is UPF0346 protein SP70585_0986.